We begin with the raw amino-acid sequence, 177 residues long: Large ribosomal subunit protein uL6 (177 aa).

This sequence belongs to the universal ribosomal protein uL6 family. As to quaternary structure, part of the 50S ribosomal subunit.

In terms of biological role, this protein binds to the 23S rRNA, and is important in its secondary structure. It is located near the subunit interface in the base of the L7/L12 stalk, and near the tRNA binding site of the peptidyltransferase center. The protein is Large ribosomal subunit protein uL6 of Acinetobacter baumannii (strain SDF).